Here is a 633-residue protein sequence, read N- to C-terminus: MTTPKKTAKTSGNEARELADLSEDIGIRFKYPNSERVYLQGSRDDIRVPLREIRQDDTYTAQGAEANPPIPVYDTSGVYGDPAAHIDLKQGLPHIRTVWLDERGDTEILPKLSSEYGIERAHDPKTAHLRFNQITRPRRAKAGRNVTQLHYARQGIITPEMEFVAIRERLKLDELSQKPEYAKLLKQHAGQSFGANIPTHPDQITPEFVRREIAAGRAIIPANINHPELEPMIIGRNFRVKINGNLGNSAVTSSLTEEVEKMVWSLRWGADTIMDLSTGAHIHETREWIIRNAPVPIGTVPIYQALEKTGGIAEDLTWDLFRDTLIEQAEQGVDYFTIHAGVLLRYVPMTANRLTGIVSRGGSIMAKWCLAHHRENFLYTHFDEICEIMKAYDVSFSLGDGLRPGCIADANDESQFAELHTLGELTDKAWKHDVQVMIEGPGHVPLQRVKENMTEELQHCFEAPFYTLGPLVTDIAPGYDHITSGIGAANIGWYGTAMLCYVTPKEHLGLPDKEDVRTGIITYKLAAHAADLAKGWPGAQLRDNALSKARFEFRWRDQFRLSLDPERAESFHDETLPAEGAKIAHFCSMCGPKFCSMKITQEVRDYADKQKAQRQGMEEKAVEFVKKGAKIYS.

Substrate contacts are provided by residues Asn-245, Met-274, Tyr-303, His-339, 359-361 (SRG), 400-403 (DGLR), and Glu-439. Residue His-443 participates in Zn(2+) binding. Tyr-466 is a binding site for substrate. Position 507 (His-507) interacts with Zn(2+). [4Fe-4S] cluster-binding residues include Cys-587, Cys-590, and Cys-595.

The protein belongs to the ThiC family. Homodimer. [4Fe-4S] cluster is required as a cofactor.

The catalysed reaction is 5-amino-1-(5-phospho-beta-D-ribosyl)imidazole + S-adenosyl-L-methionine = 4-amino-2-methyl-5-(phosphooxymethyl)pyrimidine + CO + 5'-deoxyadenosine + formate + L-methionine + 3 H(+). It functions in the pathway cofactor biosynthesis; thiamine diphosphate biosynthesis. In terms of biological role, catalyzes the synthesis of the hydroxymethylpyrimidine phosphate (HMP-P) moiety of thiamine from aminoimidazole ribotide (AIR) in a radical S-adenosyl-L-methionine (SAM)-dependent reaction. In Neisseria meningitidis serogroup A / serotype 4A (strain DSM 15465 / Z2491), this protein is Phosphomethylpyrimidine synthase.